Consider the following 131-residue polypeptide: ER membrane protein complex subunit 5 (131 aa).

Residues 1–3 (MAP) lie on the Cytoplasmic side of the membrane. A helical membrane pass occupies residues 4–22 (SLWKGLVGIGLFALAHAAF). The Lumenal segment spans residues 23–43 (SAAQHRSYMRLTEKEDESLPI). A helical transmembrane segment spans residues 44 to 63 (DIVLQTLLAFAVTCYGIVHI). The Cytoplasmic segment spans residues 64 to 131 (AGEFKDMDAT…KLRKLESLRR (68 aa)). Ser-120 carries the phosphoserine modification.

Belongs to the membrane magnesium transporter (TC 1.A.67) family. In terms of assembly, component of the ER membrane protein complex (EMC).

The protein resides in the endoplasmic reticulum membrane. Its subcellular location is the golgi apparatus membrane. It is found in the early endosome membrane. Its function is as follows. Part of the endoplasmic reticulum membrane protein complex (EMC) that enables the energy-independent insertion into endoplasmic reticulum membranes of newly synthesized membrane proteins. Preferentially accommodates proteins with transmembrane domains that are weakly hydrophobic or contain destabilizing features such as charged and aromatic residues. Involved in the cotranslational insertion of multi-pass membrane proteins in which stop-transfer membrane-anchor sequences become ER membrane spanning helices. It is also required for the post-translational insertion of tail-anchored/TA proteins in endoplasmic reticulum membranes. By mediating the proper cotranslational insertion of N-terminal transmembrane domains in an N-exo topology, with translocated N-terminus in the lumen of the ER, controls the topology of multi-pass membrane proteins like the G protein-coupled receptors. By regulating the insertion of various proteins in membranes, it is indirectly involved in many cellular processes. May be involved in Mg(2+) transport. This Homo sapiens (Human) protein is ER membrane protein complex subunit 5.